The primary structure comprises 205 residues: SREBP regulating gene protein (205 aa).

Topologically, residues 1 to 16 are cytoplasmic; the sequence is MVNLAAMVWRRLLRKR. A helical transmembrane segment spans residues 17–35; sequence WVLALVFGLSLVYFLSSTF. Topologically, residues 36-205 are lumenal; the sequence is KQEERAVRDR…GESPPELFPA (170 aa). An N-linked (GlcNAc...) asparagine glycan is attached at N67.

It belongs to the SPRING family. Interacts with SCAP.

Its subcellular location is the golgi apparatus membrane. Its function is as follows. Positively regulates hepatic SREBP signaling pathway by modulating the proper localization of SCAP (SREBP cleavage-activating protein) to the endoplasmic reticulum, thereby controlling the level of functional SCAP. In Homo sapiens (Human), this protein is SREBP regulating gene protein.